A 407-amino-acid polypeptide reads, in one-letter code: Peptidase T (407 aa).

H82 provides a ligand contact to Zn(2+). D84 is a catalytic residue. D143 contributes to the Zn(2+) binding site. Residue E177 is the Proton acceptor of the active site. Zn(2+)-binding residues include E178, D200, and H382.

It belongs to the peptidase M20B family. Zn(2+) is required as a cofactor.

It localises to the cytoplasm. The enzyme catalyses Release of the N-terminal residue from a tripeptide.. In terms of biological role, cleaves the N-terminal amino acid of tripeptides. The polypeptide is Peptidase T (Streptococcus pyogenes serotype M6 (strain ATCC BAA-946 / MGAS10394)).